The chain runs to 416 residues: UV excision repair protein RAD23 homolog B (416 aa).

The 79-residue stretch at 1 to 79 (MQVTLKTLQQ…VVVMVTKPKA (79 aa)) folds into the Ubiquitin-like domain. The span at 83 to 111 (AVPATTQPSSTPSPTAVSSSPAVAAAQAP) shows a compositional bias: low complexity. A disordered region spans residues 83-175 (AVPATTQPSS…STPGDSSRSN (93 aa)). Residues 112 to 121 (APTPALPPTS) are compositionally biased toward pro residues. A compositionally biased stretch (low complexity) spans 122–143 (TPASTAPASTTASSEPAPAGAT). Thr-155 carries the phosphothreonine modification. Phosphoserine occurs at positions 160 and 174. Position 186 is a phosphothreonine (Thr-186). In terms of domain architecture, UBA 1 spans 188–228 (QSYENMVTEIMSMGYEREQVIAALRASFNNPDRAVEYLLMG). A Phosphoserine modification is found at Ser-199. At Tyr-202 the chain carries Phosphotyrosine. Positions 274-317 (HPLEFLRNQPQFQQMRQIIQQNPSLLPALLQQIGRENPQLLQQI) constitute an STI1 domain. Positions 333-356 (QEAGSQGGGGGGGGGGGGGGGGGI) are disordered. Residues 337-356 (SQGGGGGGGGGGGGGGGGGI) are compositionally biased toward gly residues. The UBA 2 domain occupies 371–411 (PQEKEAIERLKALGFPEGLVIQAYFACEKNENLAANFLLQQ).

The protein belongs to the RAD23 family. As to quaternary structure, component of the XPC complex composed of XPC, RAD23B and CETN2. Interacts with NGLY1 and PSMC1. Interacts with ATXN3. Interacts with AMFR. Interacts with VCP; the interaction is indirect and mediated by NGLY1.

The protein localises to the nucleus. The protein resides in the cytoplasm. Multiubiquitin chain receptor involved in modulation of proteasomal degradation. Binds to polyubiquitin chains. Proposed to be capable to bind simultaneously to the 26S proteasome and to polyubiquitinated substrates and to deliver ubiquitinated proteins to the proteasome. May play a role in endoplasmic reticulum-associated degradation (ERAD) of misfolded glycoproteins by association with PNGase and delivering deglycosylated proteins to the proteasome. Functionally, involved in global genome nucleotide excision repair (GG-NER) by acting as component of the XPC complex. Cooperatively with Cetn2 appears to stabilize Xpc. May protect Xpc from proteasomal degradation. Its function is as follows. The XPC complex is proposed to represent the first factor bound at the sites of DNA damage and together with other core recognition factors, Xpa, RPA and the TFIIH complex, is part of the pre-incision (or initial recognition) complex. The XPC complex recognizes a wide spectrum of damaged DNA characterized by distortions of the DNA helix such as single-stranded loops, mismatched bubbles or single-stranded overhangs. The orientation of XPC complex binding appears to be crucial for inducing a productive NER. XPC complex is proposed to recognize and to interact with unpaired bases on the undamaged DNA strand which is followed by recruitment of the TFIIH complex and subsequent scanning for lesions in the opposite strand in a 5'-to-3' direction by the NER machinery. Cyclobutane pyrimidine dimers (CPDs) which are formed upon UV-induced DNA damage esacpe detection by the XPC complex due to a low degree of structural perurbation. Instead they are detected by the UV-DDB complex which in turn recruits and cooperates with the XPC complex in the respective DNA repair. In vitro, the Xpc:Rad23b dimer is sufficient to initiate NER; it preferentially binds to cisplatin and UV-damaged double-stranded DNA and also binds to a variety of chemically and structurally diverse DNA adducts. Xpc:Rad23b contacts DNA both 5' and 3' of a cisplatin lesion with a preference for the 5' side. Xpc:Rad23bB induces a bend in DNA upon binding. Xpc:Rad23b stimulates the activity of DNA glycosylases Tdg and Smug1. The protein is UV excision repair protein RAD23 homolog B (Rad23b) of Mus musculus (Mouse).